A 371-amino-acid polypeptide reads, in one-letter code: Protein STRICTOSIDINE SYNTHASE-LIKE 6 (371 aa).

An N-terminal signal peptide occupies residues 1-21 (MPVFLSSRFLFFCIIVPLLIS). Residues Asn101 and Asn137 are each glycosylated (N-linked (GlcNAc...) asparagine). Residue Tyr303 is modified to Phosphotyrosine.

Belongs to the strictosidine synthase family.

It localises to the vacuole. This Arabidopsis thaliana (Mouse-ear cress) protein is Protein STRICTOSIDINE SYNTHASE-LIKE 6.